Here is a 301-residue protein sequence, read N- to C-terminus: ATP synthase gamma chain (301 aa).

It belongs to the ATPase gamma chain family. As to quaternary structure, F-type ATPases have 2 components, CF(1) - the catalytic core - and CF(0) - the membrane proton channel. CF(1) has five subunits: alpha(3), beta(3), gamma(1), delta(1), epsilon(1). CF(0) has three main subunits: a, b and c.

Its subcellular location is the cell inner membrane. Produces ATP from ADP in the presence of a proton gradient across the membrane. The gamma chain is believed to be important in regulating ATPase activity and the flow of protons through the CF(0) complex. This chain is ATP synthase gamma chain, found in Helicobacter acinonychis (strain Sheeba).